The primary structure comprises 129 residues: UPF0344 protein SAR0931 (129 aa).

Transmembrane regions (helical) follow at residues Met-1–Leu-21, Leu-36–Ile-56, Met-67–Ile-87, and Met-99–Leu-119.

Belongs to the UPF0344 family.

The protein resides in the cell membrane. The sequence is that of UPF0344 protein SAR0931 from Staphylococcus aureus (strain MRSA252).